The chain runs to 588 residues: MDDEETSEINSVQGQDEDVQLEVQPQAQGPQDRQVDAIEQAWNNATQDEQSPPAEEAFQDPLAIDGEGGNAPEAMVEDVLQDDTASEGSHPSSDMSLETPGSEDDSDLELLPRWMIPQNRLRSAVDMMVSQARNRDGGIAALLNRDNFLQRVRSIVFSQERRRSRTSEETSQEAADAEQPNDPPPQQPPRPPIDIGFDTNLPAEHSYFGNHLSRVPGVDYLEVGSVHHMLIFLHQHILFPGEVLPFMIDGRMFDEDMPGLDGLIFGVGFPLMQPPEDNPLKLYGVTCQIYERGESGRGLVFYKSRALQRIVINCEDIQGSPQYIARNPTSKCFSKVKILPEYFLPEPLQSVEMGSMARFRDIPSMRDKYRRFQLSTTTWPSDACQEYSFASIVERARQRLESQKIDTMPKCPIQLSFWLVRNLHLTEKMMRLTFLTDSVNTRLQLIKSTFKDESLFFCRYCNSSLAHCADLFAMSKHGVQTQYCNPDGYIHETNTVYRVMSHAIGYSGEPSTKFSWFPGYQWHIILCKFCAQHVGWEFKAVQPNLTPRVFFGLAGSSVRIGKASENTPFNGSTYVVRNMLRLISNEME.

Disordered stretches follow at residues Met1–Asp107 and Gln159–Phe197. The span at Ala41–Gln50 shows a compositional bias: polar residues. Over residues Met75–Ala85 the composition is skewed to acidic residues. Residues Ser86 to Ser96 are compositionally biased toward polar residues. Residues Gln159–Glu168 are compositionally biased toward basic and acidic residues. The segment covering Asn181–Pro192 has biased composition (pro residues). Positions His228–Ser454 constitute a Lon N-terminal domain. Positions Glu453–Lys562 constitute a CULT domain. Cys458, Cys461, Cys527, and Cys530 together coordinate Zn(2+).

It belongs to the CRBN family. In terms of assembly, likely a component of a DCX (DDB1-CUL4-X-box) protein ligase complex. May interact with pic/DDB1. Ubiquitinated.

It localises to the nucleus. It participates in protein modification; protein ubiquitination. In terms of biological role, substrate recognition component of a DCX (DDB1-CUL4-X-box) E3 protein ligase complex that mediates the ubiquitination and subsequent proteasomal degradation of target proteins. Has an essential role in mediating growth by negatively regulating insulin signaling. It also has a role in maintaining presynaptic function in the neuromuscular junction synapses of third-instar larvae. The protein is Protein cereblon of Drosophila yakuba (Fruit fly).